A 160-amino-acid chain; its full sequence is Transcription elongation factor GreA (160 aa).

Residues 1–72 (MAEKTYVMTL…QIQILETKIR (72 aa)) adopt a coiled-coil conformation.

This sequence belongs to the GreA/GreB family.

Necessary for efficient RNA polymerase transcription elongation past template-encoded arresting sites. The arresting sites in DNA have the property of trapping a certain fraction of elongating RNA polymerases that pass through, resulting in locked ternary complexes. Cleavage of the nascent transcript by cleavage factors such as GreA or GreB allows the resumption of elongation from the new 3'terminus. GreA releases sequences of 2 to 3 nucleotides. This Streptococcus thermophilus (strain CNRZ 1066) protein is Transcription elongation factor GreA.